A 371-amino-acid chain; its full sequence is Aspartate-semialdehyde dehydrogenase (371 aa).

NADP(+) is bound by residues 11–14, 38–39, and Q75; these read RGMV and TS. Residue R104 participates in phosphate binding. Residue C137 is the Acyl-thioester intermediate of the active site. Q164 contacts substrate. Position 167 to 168 (167 to 168) interacts with NADP(+); sequence SG. E243 contributes to the substrate binding site. K246 is a phosphate binding site. R269 is a binding site for substrate. The active-site Proton acceptor is H276. Q352 is a binding site for NADP(+).

Belongs to the aspartate-semialdehyde dehydrogenase family. In terms of assembly, homodimer.

It catalyses the reaction L-aspartate 4-semialdehyde + phosphate + NADP(+) = 4-phospho-L-aspartate + NADPH + H(+). It functions in the pathway amino-acid biosynthesis; L-lysine biosynthesis via DAP pathway; (S)-tetrahydrodipicolinate from L-aspartate: step 2/4. The protein operates within amino-acid biosynthesis; L-methionine biosynthesis via de novo pathway; L-homoserine from L-aspartate: step 2/3. It participates in amino-acid biosynthesis; L-threonine biosynthesis; L-threonine from L-aspartate: step 2/5. Functionally, catalyzes the NADPH-dependent formation of L-aspartate-semialdehyde (L-ASA) by the reductive dephosphorylation of L-aspartyl-4-phosphate. In Buchnera aphidicola subsp. Acyrthosiphon pisum (strain APS) (Acyrthosiphon pisum symbiotic bacterium), this protein is Aspartate-semialdehyde dehydrogenase.